We begin with the raw amino-acid sequence, 374 residues long: MTEHAILVLEDGTVFEGDAVGANGLSVGEVVFNTALTGYQEILTDPSYAYQLVTLTYPHIGNTGCTDQDDEANKVWAAGLIVRDVPRRPSNWRSQISLSDWLAARGVVAIAGIDTRKLTRILREKGAQHGALMAGEIDVGKAQDAAHQFAGIKGMDLAKVVSTKQGYSWYEGQLDLDRNECKRAAPQYKVVAYDYGVKLNILRMLAERGCDLTVVPAQTPADEVLALCPDGVFLSNGPGDPEPCDYAVAAIKTFIMRRVPIFGICLGHQLLAQAVGARVVKMSHGHHGANHPVQDLRSGRVMITSQNHGFAVDEATLPNNVRVTHRSLFDGTNQGIELLDVPAFSFQGHPEASPGPHDVDVLFDRFITMMAAQS.

Residues 1-186 (MTEHAILVLE…DRNECKRAAP (186 aa)) form a CPSase region. 3 residues coordinate L-glutamine: S47, G237, and G239. Residues 189–374 (KVVAYDYGVK…RFITMMAAQS (186 aa)) form the Glutamine amidotransferase type-1 domain. The Nucleophile role is filled by C265. L-glutamine contacts are provided by L266, Q269, N307, G309, and F310. Active-site residues include H349 and E351.

The protein belongs to the CarA family. As to quaternary structure, composed of two chains; the small (or glutamine) chain promotes the hydrolysis of glutamine to ammonia, which is used by the large (or ammonia) chain to synthesize carbamoyl phosphate. Tetramer of heterodimers (alpha,beta)4.

It catalyses the reaction hydrogencarbonate + L-glutamine + 2 ATP + H2O = carbamoyl phosphate + L-glutamate + 2 ADP + phosphate + 2 H(+). The catalysed reaction is L-glutamine + H2O = L-glutamate + NH4(+). Its pathway is amino-acid biosynthesis; L-arginine biosynthesis; carbamoyl phosphate from bicarbonate: step 1/1. It functions in the pathway pyrimidine metabolism; UMP biosynthesis via de novo pathway; (S)-dihydroorotate from bicarbonate: step 1/3. Its function is as follows. Small subunit of the glutamine-dependent carbamoyl phosphate synthetase (CPSase). CPSase catalyzes the formation of carbamoyl phosphate from the ammonia moiety of glutamine, carbonate, and phosphate donated by ATP, constituting the first step of 2 biosynthetic pathways, one leading to arginine and/or urea and the other to pyrimidine nucleotides. The small subunit (glutamine amidotransferase) binds and cleaves glutamine to supply the large subunit with the substrate ammonia. This is Carbamoyl phosphate synthase small chain from Xylella fastidiosa (strain Temecula1 / ATCC 700964).